The chain runs to 428 residues: Probable anion transporter 6 (428 aa).

Positions Met1 to Ile22 are cleaved as a signal peptide. Transmembrane regions (helical) follow at residues Met47 to Ala67, Leu74 to Pro94, Ile98 to Ile118, Leu137 to Val157, Ser164 to Ala184, Ile221 to Leu241, Leu269 to Ile289, Lys301 to Phe321, Ala327 to Val347, Phe356 to Val376, and Thr401 to Ser421.

The protein belongs to the major facilitator superfamily. Sodium/anion cotransporter (TC 2.A.1.14) family.

The protein resides in the cell membrane. Its function is as follows. Probable anion transporter. This Oryza sativa subsp. japonica (Rice) protein is Probable anion transporter 6 (PHT4;6).